Consider the following 344-residue polypeptide: Transcription factor AIG1 (344 aa).

The region spanning 131–180 is the bHLH domain; sequence AASKSHSEAERRRRERINTHLAKLRSILPNTTKTDKASLLAEVIQHMKEL. Positions 313–344 are disordered; it reads NDESNDNNNLEKSSSGGIKRQRTSKMVNRCYN. The segment covering 318–327 has biased composition (low complexity); that stretch reads DNNNLEKSSS.

Homodimer. Interacts with LHW.

The protein resides in the nucleus. Transcription factor required for MONOPTEROS-dependent root initiation in embryo. Transcriptionally controlled by MONOPTEROS. This chain is Transcription factor AIG1 (BHLH32), found in Arabidopsis thaliana (Mouse-ear cress).